Here is a 118-residue protein sequence, read N- to C-terminus: Large ribosomal subunit protein uL18 (118 aa).

It belongs to the universal ribosomal protein uL18 family. In terms of assembly, part of the 50S ribosomal subunit; part of the 5S rRNA/L5/L18/L25 subcomplex. Contacts the 5S and 23S rRNAs.

Functionally, this is one of the proteins that bind and probably mediate the attachment of the 5S RNA into the large ribosomal subunit, where it forms part of the central protuberance. The polypeptide is Large ribosomal subunit protein uL18 (Helicobacter pylori (strain J99 / ATCC 700824) (Campylobacter pylori J99)).